The sequence spans 139 residues: Cystatin cpi-1 (139 aa).

Positions 1-19 (MRFILLIALVFAVLDGINC) are cleaved as a signal peptide. A glycan (N-linked (GlcNAc...) asparagine) is linked at N29. The Secondary area of contact motif lies at 65–69 (QVVAG). Cysteines 83 and 99 form a disulfide.

It belongs to the cystatin family.

Functionally, cysteine protease inhibitor which inhibits members of the peptidase C1 family. Does not inhibit asparaginyl endopeptidase. May play a protective role against exogenous cysteine proteases derived from soil bacteria or fungi, or rotting fruits and vegetation. The protein is Cystatin cpi-1 of Caenorhabditis elegans.